Reading from the N-terminus, the 173-residue chain is Shikimate kinase (173 aa).

14 to 19 (GAGKST) lines the ATP pocket. Ser18 lines the Mg(2+) pocket. Substrate-binding residues include Asp36, Arg60, and Gly82. Position 120 (Lys120) interacts with ATP. Arg140 provides a ligand contact to substrate.

The protein belongs to the shikimate kinase family. Monomer. Mg(2+) is required as a cofactor.

It is found in the cytoplasm. The enzyme catalyses shikimate + ATP = 3-phosphoshikimate + ADP + H(+). The protein operates within metabolic intermediate biosynthesis; chorismate biosynthesis; chorismate from D-erythrose 4-phosphate and phosphoenolpyruvate: step 5/7. Its function is as follows. Catalyzes the specific phosphorylation of the 3-hydroxyl group of shikimic acid using ATP as a cosubstrate. This chain is Shikimate kinase (aroK), found in Wigglesworthia glossinidia brevipalpis.